Reading from the N-terminus, the 214-residue chain is Phosphatidylserine decarboxylase proenzyme (214 aa).

Catalysis depends on Ser182, which acts as the Schiff-base intermediate with substrate; via pyruvic acid. Ser182 is subject to Pyruvic acid (Ser); by autocatalysis.

It belongs to the phosphatidylserine decarboxylase family. PSD-A subfamily. Heterodimer of a large membrane-associated beta subunit and a small pyruvoyl-containing alpha subunit. Pyruvate serves as cofactor. In terms of processing, is synthesized initially as an inactive proenzyme. Formation of the active enzyme involves a self-maturation process in which the active site pyruvoyl group is generated from an internal serine residue via an autocatalytic post-translational modification. Two non-identical subunits are generated from the proenzyme in this reaction, and the pyruvate is formed at the N-terminus of the alpha chain, which is derived from the carboxyl end of the proenzyme. The post-translation cleavage follows an unusual pathway, termed non-hydrolytic serinolysis, in which the side chain hydroxyl group of the serine supplies its oxygen atom to form the C-terminus of the beta chain, while the remainder of the serine residue undergoes an oxidative deamination to produce ammonia and the pyruvoyl prosthetic group on the alpha chain.

The protein localises to the cell membrane. The catalysed reaction is a 1,2-diacyl-sn-glycero-3-phospho-L-serine + H(+) = a 1,2-diacyl-sn-glycero-3-phosphoethanolamine + CO2. Its pathway is phospholipid metabolism; phosphatidylethanolamine biosynthesis; phosphatidylethanolamine from CDP-diacylglycerol: step 2/2. Its function is as follows. Catalyzes the formation of phosphatidylethanolamine (PtdEtn) from phosphatidylserine (PtdSer). This Burkholderia cenocepacia (strain ATCC BAA-245 / DSM 16553 / LMG 16656 / NCTC 13227 / J2315 / CF5610) (Burkholderia cepacia (strain J2315)) protein is Phosphatidylserine decarboxylase proenzyme.